Reading from the N-terminus, the 158-residue chain is ATP synthase subunit beta, mitochondrial (158 aa).

Belongs to the ATPase alpha/beta chains family. As to quaternary structure, F-type ATPases have 2 components, CF(1) - the catalytic core - and CF(0) - the membrane proton channel. CF(1) has five subunits: alpha(3), beta(3), gamma(1), delta(1), epsilon(1). CF(0) has three main subunits: a, b and c.

The protein resides in the mitochondrion. It is found in the mitochondrion inner membrane. The enzyme catalyses ATP + H2O + 4 H(+)(in) = ADP + phosphate + 5 H(+)(out). Functionally, mitochondrial membrane ATP synthase (F(1)F(0) ATP synthase or Complex V) produces ATP from ADP in the presence of a proton gradient across the membrane which is generated by electron transport complexes of the respiratory chain. F-type ATPases consist of two structural domains, F(1) - containing the extramembraneous catalytic core, and F(0) - containing the membrane proton channel, linked together by a central stalk and a peripheral stalk. During catalysis, ATP synthesis in the catalytic domain of F(1) is coupled via a rotary mechanism of the central stalk subunits to proton translocation. Subunits alpha and beta form the catalytic core in F(1). Rotation of the central stalk against the surrounding alpha(3)beta(3) subunits leads to hydrolysis of ATP in three separate catalytic sites on the beta subunits. The chain is ATP synthase subunit beta, mitochondrial from Schizaphis graminum (Green bug aphid).